A 249-amino-acid polypeptide reads, in one-letter code: Triosephosphate isomerase (249 aa).

9–11 contacts substrate; it reads NWK. His-95 (electrophile) is an active-site residue. Glu-166 (proton acceptor) is an active-site residue. Residues Gly-172, Ser-211, and 232 to 233 each bind substrate; that span reads GG.

Belongs to the triosephosphate isomerase family. As to quaternary structure, homodimer.

The protein localises to the cytoplasm. The enzyme catalyses D-glyceraldehyde 3-phosphate = dihydroxyacetone phosphate. The protein operates within carbohydrate biosynthesis; gluconeogenesis. It participates in carbohydrate degradation; glycolysis; D-glyceraldehyde 3-phosphate from glycerone phosphate: step 1/1. In terms of biological role, involved in the gluconeogenesis. Catalyzes stereospecifically the conversion of dihydroxyacetone phosphate (DHAP) to D-glyceraldehyde-3-phosphate (G3P). The sequence is that of Triosephosphate isomerase from Legionella pneumophila (strain Lens).